Here is a 256-residue protein sequence, read N- to C-terminus: Catechol O-methyltransferase A (256 aa).

Residues 1-27 (MLWVVLAVVVVLASVLVLLRQSSGLLA) form the signal peptide. The N-linked (GlcNAc...) asparagine glycan is linked to asparagine 58. 4 residues coordinate S-adenosyl-L-methionine: valine 84, serine 114, glutamate 132, and aspartate 183. Position 183 (aspartate 183) interacts with Mg(2+). Lysine 186 lines the substrate pocket. Mg(2+) is bound by residues aspartate 211 and asparagine 212. Residues asparagine 212 and glutamate 241 each coordinate substrate.

The protein belongs to the class I-like SAM-binding methyltransferase superfamily. Cation-dependent O-methyltransferase family. The cofactor is Mg(2+). In terms of tissue distribution, widely expressed. Has higher expression in females compared to males. Strongly expressed in liver and diencephalon. Expressed at lower levels in hindbrain, spinal cord, eye, telencephalon, spleen, gut, gill and muscle. Detected in ovary and testis. In eye, detected in all layers of the retina with highest expression in the inner nuclear layer. In gut, expressed in the lamina propria but has little or no expression in gut epithelium. In brain, has strongest expression near the midline of the telencephalon, in the periventricular gray zone of the optic tectum, in the preglomerular nucleus, and near the walls of the diencephalic ventricle.

The protein resides in the secreted. It catalyses the reaction a catechol + S-adenosyl-L-methionine = a guaiacol + S-adenosyl-L-homocysteine + H(+). Functionally, catalyzes the O-methylation, and thereby the inactivation, of catecholamine neurotransmitters and catechol hormones. Shows highest activity towards catecholestrogens and dobutamine. Also has lower activity towards L-DOPA, dopamine and epinephrine. Active towards the xenobiotic compounds methyl-DOPA, carbidopa, isoproterenol, and apomorphine. This is Catechol O-methyltransferase A from Danio rerio (Zebrafish).